A 306-amino-acid polypeptide reads, in one-letter code: MRLKELGEFGLIDLIKKTLESKVIGDDTAPVEYCSKKLLLTTDVLNEGVHFLRSYIPEAVGWKAISVNVSDVIANGGLPKWALISLNLPEDLEVSYVERFYIGVKRACEFYKCEVVGGNISKSEKIGISVFLVGETERFVGRDGARLGDSVFVSGTLGDSRAGLELLLMEKEEYEPFELALIQRHLRPTARIDYVKHIQKYANASMDISDGLVADANHLAQRSGVKIEILSEKLPLSNELKMYCEKYGKNPIEYALFGGEDYQLLFTHPKERWNPFLDMTEIGRVEEGEGVFVDGKKVEPKGWKHF.

Mg(2+) is bound by residues D27, T41, T42, and D43. Residue H50 coordinates substrate. D71 serves as a coordination point for Mg(2+). ATP is bound by residues Y101, 118 to 119, and R142; that span reads GN. N119 contributes to the Mg(2+) binding site. Residue D207 coordinates Mg(2+). Position 209 (S209) interacts with ATP. Residue D210 coordinates Mg(2+). Substrate is bound by residues E260 and W303.

The protein belongs to the thiamine-monophosphate kinase family. In terms of assembly, homodimer.

The enzyme catalyses thiamine phosphate + ATP = thiamine diphosphate + ADP. The protein operates within cofactor biosynthesis; thiamine diphosphate biosynthesis; thiamine diphosphate from thiamine phosphate: step 1/1. Functionally, catalyzes the ATP-dependent phosphorylation of thiamine-monophosphate (TMP) to form thiamine-pyrophosphate (TPP), the active form of vitamin B1. The protein is Thiamine-monophosphate kinase (thiL) of Aquifex aeolicus (strain VF5).